The following is an 86-amino-acid chain: Large ribosomal subunit protein bL31B (86 aa).

Belongs to the bacterial ribosomal protein bL31 family. Type B subfamily. Part of the 50S ribosomal subunit.

The polypeptide is Large ribosomal subunit protein bL31B (Burkholderia lata (strain ATCC 17760 / DSM 23089 / LMG 22485 / NCIMB 9086 / R18194 / 383)).